Consider the following 350-residue polypeptide: tRNA pseudouridine synthase D (350 aa).

Aspartate 85 acts as the Nucleophile in catalysis. The TRUD domain occupies 160-310; it reads GVINYFGEQR…EAARRTILLR (151 aa).

It belongs to the pseudouridine synthase TruD family.

It catalyses the reaction uridine(13) in tRNA = pseudouridine(13) in tRNA. Functionally, responsible for synthesis of pseudouridine from uracil-13 in transfer RNAs. This is tRNA pseudouridine synthase D from Idiomarina loihiensis (strain ATCC BAA-735 / DSM 15497 / L2-TR).